Reading from the N-terminus, the 508-residue chain is Lysine--tRNA ligase (508 aa).

Residues Glu-418 and Glu-425 each coordinate Mg(2+).

The protein belongs to the class-II aminoacyl-tRNA synthetase family. As to quaternary structure, homodimer. Mg(2+) serves as cofactor.

The protein resides in the cytoplasm. The catalysed reaction is tRNA(Lys) + L-lysine + ATP = L-lysyl-tRNA(Lys) + AMP + diphosphate. This chain is Lysine--tRNA ligase, found in Burkholderia vietnamiensis (strain G4 / LMG 22486) (Burkholderia cepacia (strain R1808)).